We begin with the raw amino-acid sequence, 228 residues long: Protein GlxC (228 aa).

This sequence belongs to the FwdC/FmdC family.

This Rhizobium meliloti (strain 1021) (Ensifer meliloti) protein is Protein GlxC (glxC).